Reading from the N-terminus, the 1070-residue chain is DNA-directed RNA polymerase subunit beta (1070 aa).

Belongs to the RNA polymerase beta chain family. As to quaternary structure, in plastids the minimal PEP RNA polymerase catalytic core is composed of four subunits: alpha, beta, beta', and beta''. When a (nuclear-encoded) sigma factor is associated with the core the holoenzyme is formed, which can initiate transcription.

It localises to the plastid. The protein resides in the chloroplast. The catalysed reaction is RNA(n) + a ribonucleoside 5'-triphosphate = RNA(n+1) + diphosphate. In terms of biological role, DNA-dependent RNA polymerase catalyzes the transcription of DNA into RNA using the four ribonucleoside triphosphates as substrates. The sequence is that of DNA-directed RNA polymerase subunit beta from Phaseolus vulgaris (Kidney bean).